The chain runs to 220 residues: Probable GTP-binding protein EngB (220 aa).

The region spanning 26–200 (EGIEIAFAGR…RAKLDEWYAP (175 aa)) is the EngB-type G domain. GTP is bound by residues 34 to 41 (GRSNAGKS), 61 to 65 (GRTQL), 79 to 82 (DLPG), 146 to 149 (TKAD), and 179 to 181 (FSS). Residues Ser41 and Thr63 each coordinate Mg(2+).

Belongs to the TRAFAC class TrmE-Era-EngA-EngB-Septin-like GTPase superfamily. EngB GTPase family. It depends on Mg(2+) as a cofactor.

Its function is as follows. Necessary for normal cell division and for the maintenance of normal septation. The sequence is that of Probable GTP-binding protein EngB from Vibrio cholerae serotype O1 (strain ATCC 39315 / El Tor Inaba N16961).